Here is a 666-residue protein sequence, read N- to C-terminus: Vicilin-like antimicrobial peptides 2-2 (666 aa).

An N-terminal signal peptide occupies residues 1 to 27 (MAINTSNLCSLLFLLSLFLLSTTVSLA). Disordered regions lie at residues 161–191 (QQKR…DPQQ) and 221–251 (RQHG…SDNP). A compositionally biased stretch (basic and acidic residues) spans 239-251 (RYEEGEEKQSDNP). 2 consecutive Cupin type-1 domains span residues 271 to 410 (SVLE…ERLR) and 455 to 625 (YNLF…KEVE).

It belongs to the 7S seed storage protein family.

It localises to the secreted. In terms of biological role, antimicrobial peptides 2b, 2c and 2d have antibacterial and antifungal activity against a range of species. In Macadamia integrifolia (Macadamia nut), this protein is Vicilin-like antimicrobial peptides 2-2.